The primary structure comprises 525 residues: GMP synthase [glutamine-hydrolyzing] (525 aa).

Positions 3 to 200 (KILILDFGSQ…VLHVAGCKPS (198 aa)) constitute a Glutamine amidotransferase type-1 domain. The Nucleophile role is filled by C79. Catalysis depends on residues H174 and E176. Residues 201-393 (WTMPNYIDEA…LGLPHDMVYR (193 aa)) enclose the GMPS ATP-PPase domain. Position 228-234 (228-234 (SGGVDSS)) interacts with ATP.

Homodimer.

The enzyme catalyses XMP + L-glutamine + ATP + H2O = GMP + L-glutamate + AMP + diphosphate + 2 H(+). It functions in the pathway purine metabolism; GMP biosynthesis; GMP from XMP (L-Gln route): step 1/1. In terms of biological role, catalyzes the synthesis of GMP from XMP. In Chromobacterium violaceum (strain ATCC 12472 / DSM 30191 / JCM 1249 / CCUG 213 / NBRC 12614 / NCIMB 9131 / NCTC 9757 / MK), this protein is GMP synthase [glutamine-hydrolyzing].